We begin with the raw amino-acid sequence, 512 residues long: Glycerol kinase 2 (512 aa).

Thr18 is an ADP binding site. Residues Thr18, Thr19, and Ser20 each coordinate ATP. Thr18 serves as a coordination point for sn-glycerol 3-phosphate. Arg22 is an ADP binding site. Residues Arg88, Glu89, Tyr140, and Asp255 each coordinate sn-glycerol 3-phosphate. Arg88, Glu89, Tyr140, Asp255, and Gln256 together coordinate glycerol. ADP contacts are provided by Thr277 and Gly321. ATP-binding residues include Thr277, Gly321, Gln325, and Gly422. ADP is bound by residues Gly422 and Asn426.

It belongs to the FGGY kinase family.

The catalysed reaction is glycerol + ATP = sn-glycerol 3-phosphate + ADP + H(+). Its pathway is polyol metabolism; glycerol degradation via glycerol kinase pathway; sn-glycerol 3-phosphate from glycerol: step 1/1. Its activity is regulated as follows. Inhibited by fructose 1,6-bisphosphate (FBP). Its function is as follows. Key enzyme in the regulation of glycerol uptake and metabolism. Catalyzes the phosphorylation of glycerol to yield sn-glycerol 3-phosphate. The sequence is that of Glycerol kinase 2 from Streptomyces coelicolor (strain ATCC BAA-471 / A3(2) / M145).